The following is an 82-amino-acid chain: Small ribosomal subunit protein eS21 (82 aa).

The protein belongs to the eukaryotic ribosomal protein eS21 family.

This chain is Small ribosomal subunit protein eS21 (RPS21), found in Cyanophora paradoxa.